Consider the following 112-residue polypeptide: Cytochrome c2 (112 aa).

Heme c is bound by residues C14, C17, H18, and M91.

The protein belongs to the cytochrome c family. In terms of processing, binds 1 heme c group covalently per subunit.

Cytochrome c2 is found mainly in purple, non-sulfur, photosynthetic bacteria where it functions as the electron donor to the oxidized bacteriochlorophyll in the photophosphorylation pathway. However, it may also have a role in the respiratory chain and is found in some non-photosynthetic bacteria. The polypeptide is Cytochrome c2 (cycA) (Rhodospirillum rubrum).